A 254-amino-acid chain; its full sequence is Phosphomannomutase (254 aa).

The Nucleophile role is filled by Asp-16. Residues Asp-16 and Asp-18 each contribute to the Mg(2+) site. The active-site Proton donor/acceptor is the Asp-18. Residues Arg-25, Arg-129, Arg-140, Arg-147, Ser-185, and Asp-187 each coordinate alpha-D-mannose 1-phosphate. Mg(2+)-binding residues include Asp-216, Tyr-228, Asp-230, and Thr-233.

It belongs to the eukaryotic PMM family. As to quaternary structure, homodimer.

The protein resides in the cytoplasm. It catalyses the reaction alpha-D-mannose 1-phosphate = D-mannose 6-phosphate. It functions in the pathway nucleotide-sugar biosynthesis; GDP-alpha-D-mannose biosynthesis; alpha-D-mannose 1-phosphate from D-fructose 6-phosphate: step 2/2. Functionally, involved in the synthesis of the GDP-mannose and dolichol-phosphate-mannose required for a number of critical mannosyl transfer reactions. Required for maintaining N-linked glycoprotein glycosylation at the neuromuscular junction (NMJ) synaptomatrix, and thus acts in multiple pathways that prevent NMJ structural overgrowth, restrict synaptic bouton differentiation, and limit NMJ neurotransmission strength, in order to maintain viability, coordinate movement, and in adults ensure correct wing positioning. Acts in the NMJ trans-synaptic Wg pathway via glycosylation of synaptic Mmp2 which enables dlp/wg signaling during development. This is Phosphomannomutase from Drosophila melanogaster (Fruit fly).